Here is a 102-residue protein sequence, read N- to C-terminus: MNIAEYHQNIEQVWLQIEEQLEEQGCDVDCDTQGSVFTITFADRSQIVVNKQEPLLELWLASKAGGFHFAFKNNQWIAQDGKLFWQCLEQACLAHGEQVSFS.

The protein belongs to the frataxin family.

Its function is as follows. Involved in iron-sulfur (Fe-S) cluster assembly. May act as a regulator of Fe-S biogenesis. This Histophilus somni (strain 129Pt) (Haemophilus somnus) protein is Iron-sulfur cluster assembly protein CyaY.